The following is a 133-amino-acid chain: UPF0344 protein SH1980 (133 aa).

Transmembrane regions (helical) follow at residues 1–21 (MLHMHIASWALTIILYVIAFL), 42–62 (VFMLLTLFSGFWLLIQEFMAA), 71–91 (MLLTLKMLCGIAVVALMEVSI), and 103–123 (LFWATIILIIITMSLGIILPW).

Belongs to the UPF0344 family.

The protein localises to the cell membrane. The polypeptide is UPF0344 protein SH1980 (Staphylococcus haemolyticus (strain JCSC1435)).